We begin with the raw amino-acid sequence, 473 residues long: Lactate utilization protein B (473 aa).

4Fe-4S ferredoxin-type domains follow at residues 302-332 (GSEF…GHSY) and 351-380 (YDDY…LHDL). 7 residues coordinate [4Fe-4S] cluster: C311, C314, C317, C321, C364, C367, and C371.

The protein belongs to the LutB/YkgF family.

Its function is as follows. Is involved in L-lactate degradation and allows cells to grow with lactate as the sole carbon source. Has probably a role as an electron transporter during oxidation of L-lactate. This Bacillus anthracis (strain A0248) protein is Lactate utilization protein B.